The chain runs to 447 residues: Tubulin beta chain (447 aa).

GTP is bound by residues Gln11, Glu69, Ser138, Gly142, Thr143, Gly144, Asn204, and Asn226. Glu69 provides a ligand contact to Mg(2+). The tract at residues 424-447 (QYQEASVSDAEEEYDEEAPLEGEE) is disordered. Positions 432 to 447 (DAEEEYDEEAPLEGEE) are enriched in acidic residues.

This sequence belongs to the tubulin family. As to quaternary structure, dimer of alpha and beta chains. A typical microtubule is a hollow water-filled tube with an outer diameter of 25 nm and an inner diameter of 15 nM. Alpha-beta heterodimers associate head-to-tail to form protofilaments running lengthwise along the microtubule wall with the beta-tubulin subunit facing the microtubule plus end conferring a structural polarity. Microtubules usually have 13 protofilaments but different protofilament numbers can be found in some organisms and specialized cells. Mg(2+) serves as cofactor.

Its subcellular location is the cytoplasm. The protein resides in the cytoskeleton. Functionally, tubulin is the major constituent of microtubules, a cylinder consisting of laterally associated linear protofilaments composed of alpha- and beta-tubulin heterodimers. Microtubules grow by the addition of GTP-tubulin dimers to the microtubule end, where a stabilizing cap forms. Below the cap, tubulin dimers are in GDP-bound state, owing to GTPase activity of alpha-tubulin. This Zymoseptoria tritici (Speckled leaf blotch fungus) protein is Tubulin beta chain (TUB1).